Here is a 313-residue protein sequence, read N- to C-terminus: Putative S-adenosyl-L-methionine-dependent methyltransferase MAV_5150 (313 aa).

Residues D139 and 168-169 contribute to the S-adenosyl-L-methionine site; that span reads DL.

Belongs to the UPF0677 family.

Its function is as follows. Exhibits S-adenosyl-L-methionine-dependent methyltransferase activity. This Mycobacterium avium (strain 104) protein is Putative S-adenosyl-L-methionine-dependent methyltransferase MAV_5150.